The chain runs to 665 residues: Phenol hydroxylase (665 aa).

FAD-binding positions include 18–19, 43–45, 51–56, Gln118, Tyr290, Asp358, and 368–372; these read PA, DKR, NGQADG, and GQGMN. Asp55 provides a ligand contact to substrate. Residue Tyr290 participates in substrate binding.

Belongs to the PheA/TfdB FAD monooxygenase family. As to quaternary structure, homodimer. FAD is required as a cofactor.

The catalysed reaction is phenol + NADPH + O2 + H(+) = catechol + NADP(+) + H2O. It functions in the pathway aromatic compound metabolism; phenol degradation. Its activity is regulated as follows. Inhibited by excess phenol. Heavy metals such AsCuSO(4), AgNO(3), or HgCl(2) severely inhibit activity. Functionally, hydroxylates phenol to catechol. Phenol is the best substrate, but the enzyme also accepts isomeric diphenols, hydroxyl-, amino-, halogen- or methyl-substituted phenols and, to a lesser degree, cresols. The chain is Phenol hydroxylase from Cutaneotrichosporon cutaneum (Yeast).